The chain runs to 240 residues: Methylthioribulose-1-phosphate dehydratase (240 aa).

Residue cysteine 99 participates in substrate binding. Positions 116 and 118 each coordinate Zn(2+). Glutamate 145 (proton donor/acceptor) is an active-site residue. Zn(2+) is bound at residue histidine 201.

This sequence belongs to the aldolase class II family. MtnB subfamily. It depends on Zn(2+) as a cofactor.

It localises to the cytoplasm. The catalysed reaction is 5-(methylsulfanyl)-D-ribulose 1-phosphate = 5-methylsulfanyl-2,3-dioxopentyl phosphate + H2O. The protein operates within amino-acid biosynthesis; L-methionine biosynthesis via salvage pathway; L-methionine from S-methyl-5-thio-alpha-D-ribose 1-phosphate: step 2/6. Catalyzes the dehydration of methylthioribulose-1-phosphate (MTRu-1-P) into 2,3-diketo-5-methylthiopentyl-1-phosphate (DK-MTP-1-P). The sequence is that of Methylthioribulose-1-phosphate dehydratase from Paracoccidioides brasiliensis (strain Pb18).